The chain runs to 422 residues: Enolase (422 aa).

(2R)-2-phosphoglycerate is bound at residue glutamine 162. Catalysis depends on glutamate 204, which acts as the Proton donor. Positions 241, 284, and 311 each coordinate Mg(2+). Residues lysine 336, arginine 365, serine 366, and lysine 387 each contribute to the (2R)-2-phosphoglycerate site. Lysine 336 serves as the catalytic Proton acceptor.

Belongs to the enolase family. In terms of assembly, component of the RNA degradosome, a multiprotein complex involved in RNA processing and mRNA degradation. Mg(2+) is required as a cofactor.

It is found in the cytoplasm. Its subcellular location is the secreted. It localises to the cell surface. It catalyses the reaction (2R)-2-phosphoglycerate = phosphoenolpyruvate + H2O. The protein operates within carbohydrate degradation; glycolysis; pyruvate from D-glyceraldehyde 3-phosphate: step 4/5. Catalyzes the reversible conversion of 2-phosphoglycerate (2-PG) into phosphoenolpyruvate (PEP). It is essential for the degradation of carbohydrates via glycolysis. The sequence is that of Enolase from Legionella pneumophila (strain Lens).